A 366-amino-acid polypeptide reads, in one-letter code: Adenosine deaminase (366 aa).

The Zn(2+) site is built by histidine 19 and histidine 21. Positions 21, 23, and 181 each coordinate substrate. Histidine 208 provides a ligand contact to Zn(2+). Glutamate 211 serves as the catalytic Proton donor. Aspartate 304 contacts Zn(2+).

It belongs to the metallo-dependent hydrolases superfamily. Adenosine and AMP deaminases family. Adenosine deaminase subfamily. It depends on Zn(2+) as a cofactor.

It catalyses the reaction adenosine + H2O + H(+) = inosine + NH4(+). It carries out the reaction 2'-deoxyadenosine + H2O + H(+) = 2'-deoxyinosine + NH4(+). Catalyzes the hydrolytic deamination of adenosine and 2-deoxyadenosine. This Mycobacterium avium (strain 104) protein is Adenosine deaminase.